A 1025-amino-acid chain; its full sequence is Multidrug resistance protein MdtC (1025 aa).

The next 12 helical transmembrane spans lie at F3 to L23, E333 to L353, I360 to C380, L387 to L407, V431 to L451, F463 to P483, L528 to P548, V853 to S873, V875 to L895, L897 to V917, P953 to G973, and I984 to V1004.

It belongs to the resistance-nodulation-cell division (RND) (TC 2.A.6) family. MdtC subfamily. In terms of assembly, part of a tripartite efflux system composed of MdtA, MdtB and MdtC. MdtC forms a heteromultimer with MdtB.

Its subcellular location is the cell inner membrane. Functionally, the MdtABC tripartite complex confers resistance against novobiocin and deoxycholate. The protein is Multidrug resistance protein MdtC of Escherichia coli (strain 55989 / EAEC).